Consider the following 685-residue polypeptide: Polyphosphate kinase (685 aa).

An ATP-binding site is contributed by asparagine 45. The Mg(2+) site is built by arginine 375 and arginine 405. Histidine 435 serves as the catalytic Phosphohistidine intermediate. Residues tyrosine 468, arginine 564, and histidine 592 each coordinate ATP.

Belongs to the polyphosphate kinase 1 (PPK1) family. The cofactor is Mg(2+). An intermediate of this reaction is the autophosphorylated ppk in which a phosphate is covalently linked to a histidine residue through a N-P bond.

It carries out the reaction [phosphate](n) + ATP = [phosphate](n+1) + ADP. Its function is as follows. Catalyzes the reversible transfer of the terminal phosphate of ATP to form a long-chain polyphosphate (polyP). This is Polyphosphate kinase from Neisseria meningitidis serogroup A / serotype 4A (strain DSM 15465 / Z2491).